Reading from the N-terminus, the 427-residue chain is Glutamate-1-semialdehyde 2,1-aminomutase (427 aa).

Lys-265 bears the N6-(pyridoxal phosphate)lysine mark.

This sequence belongs to the class-III pyridoxal-phosphate-dependent aminotransferase family. HemL subfamily. Homodimer. Requires pyridoxal 5'-phosphate as cofactor.

Its subcellular location is the cytoplasm. The catalysed reaction is (S)-4-amino-5-oxopentanoate = 5-aminolevulinate. It participates in porphyrin-containing compound metabolism; protoporphyrin-IX biosynthesis; 5-aminolevulinate from L-glutamyl-tRNA(Glu): step 2/2. The protein is Glutamate-1-semialdehyde 2,1-aminomutase of Colwellia psychrerythraea (strain 34H / ATCC BAA-681) (Vibrio psychroerythus).